Consider the following 183-residue polypeptide: Adenine phosphoribosyltransferase (183 aa).

This sequence belongs to the purine/pyrimidine phosphoribosyltransferase family. Homodimer.

Its subcellular location is the cytoplasm. It carries out the reaction AMP + diphosphate = 5-phospho-alpha-D-ribose 1-diphosphate + adenine. The protein operates within purine metabolism; AMP biosynthesis via salvage pathway; AMP from adenine: step 1/1. Functionally, catalyzes a salvage reaction resulting in the formation of AMP, that is energically less costly than de novo synthesis. This chain is Adenine phosphoribosyltransferase, found in Sodalis glossinidius (strain morsitans).